The sequence spans 143 residues: Large ribosomal subunit protein uL11 (143 aa).

It belongs to the universal ribosomal protein uL11 family. Part of the ribosomal stalk of the 50S ribosomal subunit. Interacts with L10 and the large rRNA to form the base of the stalk. L10 forms an elongated spine to which L12 dimers bind in a sequential fashion forming a multimeric L10(L12)X complex. One or more lysine residues are methylated.

Its function is as follows. Forms part of the ribosomal stalk which helps the ribosome interact with GTP-bound translation factors. The polypeptide is Large ribosomal subunit protein uL11 (Sphingopyxis alaskensis (strain DSM 13593 / LMG 18877 / RB2256) (Sphingomonas alaskensis)).